Here is a 635-residue protein sequence, read N- to C-terminus: Interferon-induced GTP-binding protein Mx1 (635 aa).

The region spanning 31–309 (DLALPAIAVI…LVHHIELSLP (279 aa)) is the Dynamin-type G domain. The interval 41-48 (GDQSSGKS) is G1 motif. 41 to 48 (GDQSSGKS) provides a ligand contact to GTP. Residues 66–68 (VTR) form a G2 motif region. Residues 147-150 (DLPG) form a G3 motif region. Residues 147-151 (DLPGI) and 216-219 (TKPD) each bind GTP. Positions 216–219 (TKPD) are G4 motif. The interval 248–251 (RCRG) is G5 motif. Residues 549–635 (LEELMRHLKS…MEARNYLVKF (87 aa)) form the GED domain.

It belongs to the TRAFAC class dynamin-like GTPase superfamily. Dynamin/Fzo/YdjA family.

The protein localises to the cytoplasm. This chain is Interferon-induced GTP-binding protein Mx1 (mx1), found in Ictalurus punctatus (Channel catfish).